The primary structure comprises 218 residues: Small ribosomal subunit protein uS3c (218 aa).

The region spanning 47 to 118 (VYKNIRNSSN…KLRMTLTEVT (72 aa)) is the KH type-2 domain.

It belongs to the universal ribosomal protein uS3 family. As to quaternary structure, part of the 30S ribosomal subunit.

The protein resides in the plastid. It localises to the chloroplast. This Physcomitrium patens (Spreading-leaved earth moss) protein is Small ribosomal subunit protein uS3c (rps3).